Here is a 533-residue protein sequence, read N- to C-terminus: D-2-hydroxyglutarate dehydrogenase, mitochondrial (533 aa).

The transit peptide at 1–55 directs the protein to the mitochondrion; that stretch reads MGLFQKCSRLSLRSSYMWSVCPQYSIAVTARETPDRALIVHWTQHRDVHNSRRLG. The FAD-binding PCMH-type domain occupies 107–286; it reads VQGSSDVLLR…TAVSILCPRK (180 aa). (R)-2-hydroxyglutarate is bound by residues Arg-397, Thr-401, and Lys-412. Arg-397 lines the (R)-lactate pocket. (R)-malate is bound by residues Arg-397, Thr-401, and Lys-412. 2 residues coordinate Zn(2+): His-445 and His-452. Residue Asn-454 participates in (R)-2-hydroxyglutarate binding. Position 486 (Glu-486) interacts with Zn(2+). His-487 serves as a coordination point for (R)-2-hydroxyglutarate. His-487 serves as a coordination point for (R)-lactate. His-487 contributes to the (R)-malate binding site.

This sequence belongs to the FAD-binding oxidoreductase/transferase type 4 family. The cofactor is FAD.

It is found in the mitochondrion. It carries out the reaction (R)-2-hydroxyglutarate + A = 2-oxoglutarate + AH2. The enzyme catalyses (R)-malate + A = oxaloacetate + AH2. Its function is as follows. Catalyzes the oxidation of D-2-hydroxyglutarate (D-2-HG) to alpha-ketoglutarate. Also catalyzes the oxidation of other D-2-hydroxyacids, such as D-malate (D-MAL) and D-lactate (D-LAC). Exhibits high activities towards D-2-HG and D-MAL but a very weak activity towards D-LAC. This Danio rerio (Zebrafish) protein is D-2-hydroxyglutarate dehydrogenase, mitochondrial (d2hgdh).